The sequence spans 79 residues: RNA-binding protein Hfq (79 aa).

The 61-residue stretch at 10-70 folds into the Sm domain; sequence DAFLNHVRKT…ISTIMPAQPI (61 aa).

It belongs to the Hfq family. As to quaternary structure, homohexamer.

Its function is as follows. RNA chaperone that binds small regulatory RNA (sRNAs) and mRNAs to facilitate mRNA translational regulation in response to envelope stress, environmental stress and changes in metabolite concentrations. Also binds with high specificity to tRNAs. The chain is RNA-binding protein Hfq from Ruegeria sp. (strain TM1040) (Silicibacter sp.).